The chain runs to 445 residues: MKPVIALVGRPNVGKSTLFNRLTRSRDALVADLPGLTRDRHYGEGRVGERPYLVVDTGGFEPVAKDGILHQMARQTRQAVEEADVVVFIVDGRNGLAPQDKSIADYLRKTGRPIFLVVNKAEGMKYTAVATDFYELGLGDPRAISAAHGDGVTDMINEALEVAYAGQPEEADDDDPSRGIKIAIVGRPNVGKSTLVNALIGEDRVIAFDMPGTTRDSIYVDFERNGKKYTLIDTAGLRRRGKVFEAIEKFSVVKTLQSISDANVVILLLDAQQDISDQDAHIAGFVVEQGRALVIGVNKWDGLDDHARDRAKADLTRKLKFLDFAKSHYISAAKKTGIGALMRSVDDAYAAAMAKLPTPKLTRALIEAVEFQQPRRRGPVRPKLRYAHQGGQNPPLIVIHGNALDAVTDTYKRYLENRFRETFSLTGTPLRIEFRSSNNPYADKG.

2 consecutive EngA-type G domains span residues 3–167 (PVIA…YAGQ) and 180–353 (IKIA…AAAM). GTP-binding positions include 9–16 (GRPNVGKS), 56–60 (DTGGF), 119–122 (NKAE), 186–193 (GRPNVGKS), 233–237 (DTAGL), and 298–301 (NKWD). Residues 354-438 (AKLPTPKLTR…PLRIEFRSSN (85 aa)) enclose the KH-like domain.

This sequence belongs to the TRAFAC class TrmE-Era-EngA-EngB-Septin-like GTPase superfamily. EngA (Der) GTPase family. In terms of assembly, associates with the 50S ribosomal subunit.

In terms of biological role, GTPase that plays an essential role in the late steps of ribosome biogenesis. In Burkholderia ambifaria (strain MC40-6), this protein is GTPase Der.